Reading from the N-terminus, the 586-residue chain is CTP synthase 2 (586 aa).

A Glutamine amidotransferase type-1 domain is found at 300 to 554; sequence SIALVGKYTK…LAATGNLNAY (255 aa). Active-site for GATase activity residues include C399, H526, and E528. Residues 564–586 are disordered; that stretch reads SDRYSDASDDSFSEPRLAELEIS. Residues S568, S571, and S574 each carry the phosphoserine modification.

Belongs to the CTP synthase family.

It carries out the reaction UTP + L-glutamine + ATP + H2O = CTP + L-glutamate + ADP + phosphate + 2 H(+). It functions in the pathway pyrimidine metabolism; CTP biosynthesis via de novo pathway; CTP from UDP: step 2/2. In terms of biological role, catalyzes the ATP-dependent amination of UTP to CTP with either L-glutamine or ammonia as the source of nitrogen. Constitutes the rate-limiting enzyme in the synthesis of cytosine nucleotides. This Bos taurus (Bovine) protein is CTP synthase 2 (CTPS2).